The primary structure comprises 650 residues: Putative pumilio homolog 7, chloroplastic (650 aa).

2 disordered regions span residues 1–22 (MDEFREASSVSSSPSTPLRTPL) and 200–235 (NDDKRNMFGNNPQQFGWPSYSSSNSGTSPYNNGQEI). The N-terminal 77 residues, 1–77 (MDEFREASSV…SPPFNGIIPK (77 aa)), are a transit peptide targeting the chloroplast. Low complexity-rich tracts occupy residues 8-22 (SSVSSSPSTPLRTPL) and 217-232 (PSYSSSNSGTSPYNNG). In terms of domain architecture, PUM-HD spans 308-650 (SNTRALMSNN…RIFSRNLLKK (343 aa)). Pumilio repeat units lie at residues 333 to 368 (DIQGYVYLMAKDQHGCRFLQRIFDEGTSVDAMIIFN), 369 to 404 (EVIAHVVELMMDPFGNYLMQKLLDVCTEEQRTQIVL), 408 to 443 (EEPGQLIRISLNAYGTRVVQRLVETIRSGKQISLVK), 445 to 480 (ALRPGFLDLIKDLNGNHVIQRCLQCLSTEDNKFIFD), 481 to 516 (AATKFCTEIATHRHGCCVLQKCIAYSMRQQREKLIA), 517 to 552 (EISRNSLLLAQDPFGNYAVQFVIELRIPSAVAMMLA), 553 to 591 (QLKGHYVQLSMQKFSSHMVERCLMHCPESRPQIVRELVS), and 594 to 625 (HFDQLLQDPYANFVIQAALAATKGPLHASLVE).

The protein resides in the plastid. The protein localises to the chloroplast. It localises to the cytoplasm. Its function is as follows. Sequence-specific RNA-binding protein that regulates translation and mRNA stability by binding the 3'-UTR of target mRNAs. The protein is Putative pumilio homolog 7, chloroplastic (APUM7) of Arabidopsis thaliana (Mouse-ear cress).